The sequence spans 220 residues: UPF0711 protein C18orf21 (220 aa).

A disordered region spans residues 117-181; it reads SRSFVSTLKS…VSTCSSKNTS (65 aa). Positions 119–136 are enriched in polar residues; that stretch reads SFVSTLKSNPATPTSKLS. Ser-126 is modified (phosphoserine). Phosphothreonine occurs at positions 130 and 139. Residues 171-180 are compositionally biased toward low complexity; the sequence is SVSTCSSKNT.

It belongs to the UPF0711 family.

This is UPF0711 protein C18orf21 (C18orf21) from Homo sapiens (Human).